A 231-amino-acid polypeptide reads, in one-letter code: MCGNTMSVPLLTDAATVSGAERETAAVIFLHGLGDTGHSWADALSTIRLPHVKYICPHAPRIPVTLNMKMVMPSWFDLMGLSPDAPEDEAGIKKAAENIKALIEHEMKNGIPANRIVLGGFSQGGALSLYTALTCPHPLAGIVALSCWLPLHRNFPQAANGSAKDLAILQCHGELDPMVPVRFGALTAEKLRTVVTPARVQFKTYPGVMHSSCPQEMAAVKEFLEKLLPPV.

Residue C2 is the site of S-palmitoyl cysteine attachment. Phosphoserine is present on S82. Active-site charge relay system residues include S122, D176, and H210.

The protein belongs to the AB hydrolase superfamily. AB hydrolase 2 family. Ubiquitous; detected at low levels.

The protein localises to the cytoplasm. The enzyme catalyses S-hexadecanoyl-L-cysteinyl-[protein] + H2O = L-cysteinyl-[protein] + hexadecanoate + H(+). It carries out the reaction prostaglandin E2 1-glyceryl ester + H2O = prostaglandin E2 + glycerol + H(+). It catalyses the reaction 1-hexadecanoyl-sn-glycero-3-phosphocholine + H2O = sn-glycerol 3-phosphocholine + hexadecanoate + H(+). The catalysed reaction is 1-octadecanoyl-sn-glycero-3-phosphocholine + H2O = octadecanoate + sn-glycerol 3-phosphocholine + H(+). The enzyme catalyses 1-hexadecanoyl-sn-glycero-3-phosphate + H2O = sn-glycerol 3-phosphate + hexadecanoate + H(+). It carries out the reaction 1-hexadecanoyl-sn-glycero-3-phospho-L-serine + H2O = sn-glycero-3-phospho-L-serine + hexadecanoate + H(+). Functionally, acts as an acyl-protein thioesterase hydrolyzing fatty acids from S-acylated cysteine residues in proteins such as trimeric G alpha proteins, GSDMD, GAP43, ZDHHC6 or HRAS. Deacylates GAP43. Mediates depalmitoylation of ZDHHC6. Has lysophospholipase activity. Hydrolyzes prostaglandin glycerol esters (PG-Gs). Hydrolyzes PG-Gs in the following order prostaglandin D2-glycerol ester (PGD2-G) &gt; prostaglandin E2 glycerol ester (PGE2-G) &gt; prostaglandin F2-alpha-glycerol ester (PGF2-alpha-G). Hydrolyzes 1-arachidonoylglycerol but not 2-arachidonoylglycerol or arachidonoylethanolamide. In Mus musculus (Mouse), this protein is Acyl-protein thioesterase 2 (Lypla2).